A 334-amino-acid polypeptide reads, in one-letter code: Procathepsin L (334 aa).

A signal peptide spans 1 to 17 (MNLLLLLAVLCLGTALA). The propeptide at 18–113 (TPKFDQTFSA…RLFQEPLMLK (96 aa)) is activation peptide. E122 provides a ligand contact to Zn(2+). Cystine bridges form between C135–C178 and C169–C211. C138 is a catalytic residue. Positions 163, 184, 199, and 205 each coordinate Zn(2+). An N-linked (GlcNAc...) (high mannose) asparagine glycan is attached at N221. 4 residues coordinate Zn(2+): D227, D250, H253, and D275. Residues C269 and C322 are joined by a disulfide bond. Residue H276 is part of the active site. Positions 289 to 290 (DS) are excised as a propeptide. N300 is a catalytic residue.

The protein belongs to the peptidase C1 family. Dimer of a heavy and a light chain linked by disulfide bonds. Interacts with Long isoform of CD74/Ii chain; the interaction stabilizes the conformation of mature CTSL. In terms of processing, during export along the endocytic pathway, pro-CTSL undergoes several proteolytic cleavages to generate the CTSL single-chain and two-chain mature forms, composed of a heavy chain linked to a light chain by disulfide bonds. Autocleavage; produces the single-chain CTSL after cleavage of the propeptide. The cleavage can be intermolecular. In terms of tissue distribution, expressed in thymus, kidney and liver. Expressed in thyroid epithelial cells. Expressed in cortical thymic epithelial cells. Expressed by antigen presenting cells (APCs) such as dendritic cells and macrophages.

The protein localises to the lysosome. It localises to the apical cell membrane. It is found in the secreted. Its subcellular location is the extracellular space. The protein resides in the cytoplasmic vesicle. The protein localises to the secretory vesicle. It localises to the chromaffin granule. It catalyses the reaction Specificity close to that of papain. As compared to cathepsin B, cathepsin L exhibits higher activity toward protein substrates, but has little activity on Z-Arg-Arg-NHMec, and no peptidyl-dipeptidase activity.. Its activity is regulated as follows. Long isoform of CD74/Ii chain stabilizes the conformation of mature CTSL by binding to its active site and serving as a chaperone to help maintain a pool of mature enzyme in endocytic compartments and extracellular space of APCs. IFNG enhances the conversion into the CTSL mature and active form. Inhibited by CST6. Inhibited by the glycopeptide antibiotic teicoplanin. Inhibited by amantadine. Functionally, thiol protease important for the overall degradation of proteins in lysosomes. Involved in the solubilization of cross-linked TG/thyroglobulin and in the subsequent release of thyroid hormone thyroxine (T4) by limited proteolysis of TG/thyroglobulin in the thyroid follicle lumen. In neuroendocrine chromaffin cells secretory vesicles, catalyzes the prohormone proenkephalin processing to the active enkephalin peptide neurotransmitter. In thymus, regulates CD4(+) T cell positive selection by generating the major histocompatibility complex class II (MHCII) bound peptide ligands presented by cortical thymic epithelial cells. Also mediates invariant chain processing in cortical thymic epithelial cells. Major elastin-degrading enzyme at neutral pH. Accumulates as a mature and active enzyme in the extracellular space of antigen presenting cells (APCs) to regulate degradation of the extracellular matrix in the course of inflammation. Secreted form generates endostatin from COL18A1. Critical for cardiac morphology and function. Plays an important role in hair follicle morphogenesis and cycling, as well as epidermal differentiation. Required for maximal stimulation of steroidogenesis by TIMP1. The protein is Procathepsin L of Mus musculus (Mouse).